A 239-amino-acid chain; its full sequence is Sugar fermentation stimulation protein homolog (239 aa).

This sequence belongs to the SfsA family.

This chain is Sugar fermentation stimulation protein homolog, found in Maridesulfovibrio salexigens (strain ATCC 14822 / DSM 2638 / NCIMB 8403 / VKM B-1763) (Desulfovibrio salexigens).